Reading from the N-terminus, the 567-residue chain is MLSVKQELLAALADELEKVSPGAGSRAAFESPKVAAHGDLACTAAMQLAKPLKQNPRALGEQLQAALEATPAFQKWVQAIEIAGPGFLNIRLKPAAKQQVVREVLAQGAQYGYQPARGEKVLVEFVSANPTGPLHVGHGRQAAIGDAISHLYATQGWSVHREFYYNDAGVQIDTLTKSTQLRAKGFKPGDDCWPTDSENPLAKNFYNGDYIQDIADAFLAKATVQADDRAFTANGDVEDYENIRQFAVAYLRNEQDKDLQAFNLQFDQYYLESSLYANGHVDATVQRLVANGKTYEQDGALWLKSTDYGDDKDRVMRKQDGTYTYFVPDVAYHIQKFQRGFTKVVNIQGTDHHGTIARVRAGLQAADVGIPQGYPDYVLHTMVRVVRNGEEVKISKRAGSYVTLRDLIEWTSKDAVRFFLLSRKPDTEYTFDVDLAVAQNNDNPVYYVQYAHARICSVLRGWREDYDVAALRDVDLSPLEGPQAQALMLLLAKYPEMLTAAAAGNAPHDVTFYLRDLAAAYHSYYDAERILVDDEAVKQARLALVAATAQVLHNGLAVLGVSAPARM.

The 'HIGH' region motif lies at 128–138 (ANPTGPLHVGH).

It belongs to the class-I aminoacyl-tRNA synthetase family. In terms of assembly, monomer.

The protein localises to the cytoplasm. The enzyme catalyses tRNA(Arg) + L-arginine + ATP = L-arginyl-tRNA(Arg) + AMP + diphosphate. The sequence is that of Arginine--tRNA ligase from Acidovorax ebreus (strain TPSY) (Diaphorobacter sp. (strain TPSY)).